The chain runs to 718 residues: Ophiobolin F synthase oblA (718 aa).

Residues 1-320 (MACKYSTLID…RYNGPTKFNE (320 aa)) are (7Z)-ophiobola-7,19-dien-3-ol synthase. Mg(2+) contacts are provided by Asp93 and Asp97. Asp93 is a binding site for substrate. A DDXXD 1 motif is present at residues 93 to 97 (DDVID). Residues 180-183 (RALD), Asn224, 228-232 (SFEKE), and 311-312 (RY) each bind substrate. Residues 224–232 (NDLFSFEKE) carry the NSE/DTE motif. The segment at 321–718 (LQLLRSEHGL…LRVMLELLKV (398 aa)) is geranylfarnesyl diphosphate synthase. The disordered stretch occupies residues 346-391 (LVEGDCHESKPNELKRKRNGVSVDDEMRTNGTNGAKKPAHVSQPST). The segment covering 349–359 (GDCHESKPNEL) has biased composition (basic and acidic residues). The isopentenyl diphosphate site is built by Lys429, Arg432, and His461. Mg(2+) contacts are provided by Asp468 and Asp472. The short motif at 468–472 (DDLED) is the DDXXD 2 element. Residue Arg477 participates in dimethylallyl diphosphate binding. Arg478 lines the isopentenyl diphosphate pocket. Lys555, Thr556, Gln594, Asn601, Lys611, and Lys621 together coordinate dimethylallyl diphosphate.

This sequence in the N-terminal section; belongs to the terpene synthase family. In the C-terminal section; belongs to the FPP/GGPP synthase family. Requires Mg(2+) as cofactor.

It carries out the reaction isopentenyl diphosphate + (2E,6E)-farnesyl diphosphate = (2E,6E,10E)-geranylgeranyl diphosphate + diphosphate. It catalyses the reaction isopentenyl diphosphate + (2E,6E,10E)-geranylgeranyl diphosphate = (2E,6E,10E,14E)-geranylfarnesyl diphosphate + diphosphate. The enzyme catalyses (2E,6E,10E,14E)-geranylfarnesyl diphosphate + H2O = ophiobolin F + diphosphate. It participates in secondary metabolite biosynthesis; terpenoid biosynthesis. Its function is as follows. Bifunctional sesterterpene synthase; part of the gene cluster that mediates the biosynthesis of the sesterterpenes ophiobolins, fungal phytotoxins with potential anti-cancer activities. The first step of the pathway is performed by the sesterterpene synthase oblA that possesses both prenyl transferase and terpene cyclase activity, converting isopentenyl diphosphate and dimethylallyl diphosphate into geranylfarnesyl diphosphate (GFPP) and further converting GFPP into ophiobolin F, respectively. Other sesterterpenoids (C(25) terpenoids) are found as minor products of oblA. It is expected that ophiobolin F is then oxidized to ophiobolin A via ophiobolin C and ophiobolin B intermediates by the combined action of the cytochrome P450 monooxygenase oblB and the FAD-dependent oxidoreductase oblC. Although oblB catalyzes multistep oxygenations at C5 and C21/C7 in a relatively efficient manner, it is unable to convert ophiobolin F to ophiobolin C and produces instead several unexpected derivatives. This chain is Ophiobolin F synthase oblA, found in Aspergillus clavatus (strain ATCC 1007 / CBS 513.65 / DSM 816 / NCTC 3887 / NRRL 1 / QM 1276 / 107).